The primary structure comprises 92 residues: Small ribosomal subunit protein uS19c (92 aa).

The protein belongs to the universal ribosomal protein uS19 family.

The protein localises to the plastid. It is found in the chloroplast. Its function is as follows. Protein S19 forms a complex with S13 that binds strongly to the 16S ribosomal RNA. This is Small ribosomal subunit protein uS19c from Ceratophyllum demersum (Rigid hornwort).